Reading from the N-terminus, the 962-residue chain is Cohesin subunit psc3 (962 aa).

A disordered region spans residues 1-72 (MSESVTTGSD…GVNVKRSRRN (72 aa)). The span at 21–30 (VMLSQSFDPM) shows a compositional bias: polar residues. Over residues 51-71 (SSKKRHPRPNSKGVNVKRSRR) the composition is skewed to basic residues. The stretch at 236–275 (LCEKSKELLNEHAIATKQLEKEEKRSRVNRNRINELNNSL) forms a coiled coil. The 86-residue stretch at 297 to 382 (FVHRYRDVEP…SRFKERILEM (86 aa)) folds into the SCD domain.

Belongs to the SCC3 family. Cohesin complexes are composed of the psm1/smc1 and psm3/smc3 heterodimer attached via their hinge domain, rad21/scc1 which link them, and psc3/scc3, which interacts with rad21. Interacts with swi6. The interaction with swi6 may contribute to recruit cohesin complex to heterochromatin.

The protein localises to the nucleus. It localises to the chromosome. Its subcellular location is the centromere. In terms of biological role, component of cohesin complex, a complex required for the cohesion of sister chromatids after DNA replication. The cohesin complex apparently forms a large proteinaceous ring within which sister chromatids can be trapped. At anaphase, the rad21 subunit of the cohesin complex is cleaved and dissociates from chromatin, allowing sister chromatids to segregate. The cohesin complex may also play a role in spindle pole assembly during mitosis. In Schizosaccharomyces pombe (strain 972 / ATCC 24843) (Fission yeast), this protein is Cohesin subunit psc3 (psc3).